The following is a 198-amino-acid chain: COMM domain-containing protein 9 (198 aa).

Position 2 is an N-acetylalanine (Ala2). The region spanning 122 to 196 is the COMM domain; the sequence is RLVDLDWRVD…RIRDQLSAVA (75 aa).

Belongs to the COMM domain-containing protein 9 family. As to quaternary structure, component of the commander complex consisting of the CCC subcomplex and the retriever subcomplex. Component of the CCC (COMMD/CCDC22/CCDC93) subcomplex consisting of COMMD1, COMMD2, COMMD3, COMMD4, COMMD5, COMMD6, COMMD7, COMMD8, COMMD9, COMMD10, CCDC22 and CCDC93; within the complex forms a heterodimer with COMMD7. Interacts with RELB and NFKB1/p105. Interacts with CCDC22, CCDC93, SCNN1B, CUL1.

It localises to the nucleus. The protein resides in the cytoplasmic vesicle. Functionally, scaffold protein in the commander complex that is essential for endosomal recycling of transmembrane cargos; the commander complex is composed of the CCC subcomplex and the retriever subcomplex. May modulate activity of cullin-RING E3 ubiquitin ligase (CRL) complexes. May down-regulate activation of NF-kappa-B. Modulates Na(+) transport in epithelial cells by regulation of apical cell surface expression of amiloride-sensitive sodium channel (ENaC) subunits. This is COMM domain-containing protein 9 (COMMD9) from Bos taurus (Bovine).